Reading from the N-terminus, the 275-residue chain is MNKQAIDALLQKINDSAINEGNPRTKQIVNRIVRDLFYTIEDLDVQPDEFWTALNYLGDAGRSGELGLLAAGLGFEHFLDLRMDEAEAKAGVEGGTPRTIEGPLYVAGAPVSDGHARLDDGTDPGQTLVMRGRVFGEDGKPLANALVEVWHANHLGNYSYFDKSQPAFNLRRSIRTDAEGKYSFRSVVPVGYSVPPQGQTQLLLDQLGRHGHRPAHIHFFVSAPGFRKLTTQINIDGDPYLWDDFAFATRDGLVPAVRQAEVRKANRTAWTVSSR.

Fe cation contacts are provided by Y158, Y192, H216, and H218.

The protein belongs to the intradiol ring-cleavage dioxygenase family. As to quaternary structure, homodimer. The cofactor is Fe(3+).

The enzyme catalyses catechol + O2 = cis,cis-muconate + 2 H(+). It participates in aromatic compound metabolism; beta-ketoadipate pathway; 5-oxo-4,5-dihydro-2-furylacetate from catechol: step 1/3. In terms of biological role, can cleave 4-methyl-, 4-chloro-, and 3-methoxycatechol at lower rates than catechol, but has no activity with 4-nitrocatechol or protocatechuic acid. The chain is Catechol 1,2-dioxygenase 2 (catA2) from Acinetobacter lwoffii.